The primary structure comprises 204 residues: Thymidylate kinase (204 aa).

ATP is bound at residue 11-18; the sequence is GLDKSGKT.

The protein belongs to the thymidylate kinase family.

The catalysed reaction is dTMP + ATP = dTDP + ADP. The protein operates within pyrimidine metabolism; dTTP biosynthesis. In Bos taurus (Bovine), this protein is Thymidylate kinase (TMK).